We begin with the raw amino-acid sequence, 148 residues long: Deoxyuridine 5'-triphosphate nucleotidohydrolase (148 aa).

Substrate is bound by residues 67-69, asparagine 80, 84-86, and methionine 94; these read RSG and LID.

This sequence belongs to the dUTPase family. Mg(2+) is required as a cofactor.

The catalysed reaction is dUTP + H2O = dUMP + diphosphate + H(+). The protein operates within pyrimidine metabolism; dUMP biosynthesis; dUMP from dCTP (dUTP route): step 2/2. Its function is as follows. This enzyme is involved in nucleotide metabolism: it produces dUMP, the immediate precursor of thymidine nucleotides and it decreases the intracellular concentration of dUTP so that uracil cannot be incorporated into DNA. This Francisella philomiragia subsp. philomiragia (strain ATCC 25017 / CCUG 19701 / FSC 153 / O#319-036) protein is Deoxyuridine 5'-triphosphate nucleotidohydrolase.